Reading from the N-terminus, the 435-residue chain is ATP-dependent RNA helicase RhlB (435 aa).

A Q motif motif is present at residues 9–37 (QKFADLGLNPQVVEGLEKKGFEFCTPIQA). Residues 40 to 219 (LPVLLSGQDI…FEHMHNPEHV (180 aa)) enclose the Helicase ATP-binding domain. Residue 53–60 (AQTGTGKT) coordinates ATP. The DEAD box signature appears at 165 to 168 (DEAD). The region spanning 245 to 390 (ALLQTLIEEE…VSDYDSSALI (146 aa)) is the Helicase C-terminal domain. A disordered region spans residues 395–435 (APVRTPSARNQQRRTNTGGARSGDRKSNNRRPRQPRQHKEA). Polar residues predominate over residues 401-413 (SARNQQRRTNTGG). Residues 422–435 (NNRRPRQPRQHKEA) show a composition bias toward basic residues.

This sequence belongs to the DEAD box helicase family. RhlB subfamily. In terms of assembly, component of the RNA degradosome, which is a multiprotein complex involved in RNA processing and mRNA degradation.

Its subcellular location is the cytoplasm. It catalyses the reaction ATP + H2O = ADP + phosphate + H(+). Its function is as follows. DEAD-box RNA helicase involved in RNA degradation. Has RNA-dependent ATPase activity and unwinds double-stranded RNA. This chain is ATP-dependent RNA helicase RhlB, found in Vibrio vulnificus (strain CMCP6).